A 553-amino-acid chain; its full sequence is Major facilitator-type transporter hxnZ (553 aa).

The next 5 membrane-spanning stretches (helical) occupy residues Phe-89–Val-109, Val-128–Ile-148, Pro-152–Ser-172, Phe-174–Cys-194, and Ala-213–Leu-233. Asn-235 is a glycosylation site (N-linked (GlcNAc...) asparagine). Transmembrane regions (helical) follow at residues Tyr-257–Phe-277, Ala-366–Leu-386, Ile-409–Leu-429, Trp-433–Lys-453, Leu-459–Met-481, Thr-496–Ala-516, and Pro-525–Phe-545.

Belongs to the major facilitator superfamily.

Its subcellular location is the cell membrane. Major facilitator-type transporter, part of the hnx cluster involved in the purine degradation. The nicotinate hydroxylase hnxS accepts nicotinate as a substrate and catalyzes the first step of nicotinate catabolism. The major facilitator-type transporters hxnP and hxnZ are probably involved in the uptake of nicotinate-derived metabolites, and the oxidoreductases hxnT and hxnY in the further metabolism of 6-OH nicotinic acid. This is Major facilitator-type transporter hxnZ from Emericella nidulans (strain FGSC A4 / ATCC 38163 / CBS 112.46 / NRRL 194 / M139) (Aspergillus nidulans).